We begin with the raw amino-acid sequence, 332 residues long: Anthranilate phosphoribosyltransferase (332 aa).

Residues G78, 81 to 82 (GD), T86, 88 to 91 (NVST), 106 to 114 (KHGNRAASS), and A118 each bind 5-phospho-alpha-D-ribose 1-diphosphate. G78 contributes to the anthranilate binding site. Residue S90 participates in Mg(2+) binding. N109 provides a ligand contact to anthranilate. Position 164 (R164) interacts with anthranilate. Residues D223 and E224 each contribute to the Mg(2+) site.

Belongs to the anthranilate phosphoribosyltransferase family. In terms of assembly, homodimer. Mg(2+) serves as cofactor.

It catalyses the reaction N-(5-phospho-beta-D-ribosyl)anthranilate + diphosphate = 5-phospho-alpha-D-ribose 1-diphosphate + anthranilate. It participates in amino-acid biosynthesis; L-tryptophan biosynthesis; L-tryptophan from chorismate: step 2/5. Its function is as follows. Catalyzes the transfer of the phosphoribosyl group of 5-phosphorylribose-1-pyrophosphate (PRPP) to anthranilate to yield N-(5'-phosphoribosyl)-anthranilate (PRA). This Sphingopyxis alaskensis (strain DSM 13593 / LMG 18877 / RB2256) (Sphingomonas alaskensis) protein is Anthranilate phosphoribosyltransferase.